The primary structure comprises 75 residues: Putative membrane protein insertion efficiency factor (75 aa).

Belongs to the UPF0161 family.

The protein resides in the cell inner membrane. Its function is as follows. Could be involved in insertion of integral membrane proteins into the membrane. The protein is Putative membrane protein insertion efficiency factor of Gloeothece citriformis (strain PCC 7424) (Cyanothece sp. (strain PCC 7424)).